The sequence spans 426 residues: Isocitrate dehydrogenase [NADP] (426 aa).

Positions 123, 125, 129, 139, and 162 each coordinate D-threo-isocitrate. Residue aspartate 312 participates in Mg(2+) binding. NADP(+)-binding positions include 344-350 (HGTAWDI), asparagine 357, and lysine 404.

This sequence belongs to the isocitrate and isopropylmalate dehydrogenases family. Homodimer. It depends on Mg(2+) as a cofactor. The cofactor is Mn(2+).

It catalyses the reaction D-threo-isocitrate + NADP(+) = 2-oxoglutarate + CO2 + NADPH. Catalyzes the oxidative decarboxylation of isocitrate to 2-oxoglutarate and carbon dioxide with the concomitant reduction of NADP(+). This chain is Isocitrate dehydrogenase [NADP] (icd), found in Aquifex aeolicus (strain VF5).